The sequence spans 333 residues: Biotin synthase (333 aa).

One can recognise a Radical SAM core domain in the interval 54–287 (ANHGAIHACS…TKIIKFAAGR (234 aa)). Residues C72, C76, and C79 each coordinate [4Fe-4S] cluster. The [2Fe-2S] cluster site is built by C151, C212, and K282.

The protein belongs to the radical SAM superfamily. Biotin synthase family. Homodimer. Requires [4Fe-4S] cluster as cofactor. The cofactor is [2Fe-2S] cluster.

It carries out the reaction (4R,5S)-dethiobiotin + (sulfur carrier)-SH + 2 reduced [2Fe-2S]-[ferredoxin] + 2 S-adenosyl-L-methionine = (sulfur carrier)-H + biotin + 2 5'-deoxyadenosine + 2 L-methionine + 2 oxidized [2Fe-2S]-[ferredoxin]. It participates in cofactor biosynthesis; biotin biosynthesis; biotin from 7,8-diaminononanoate: step 2/2. Its function is as follows. Catalyzes the conversion of dethiobiotin (DTB) to biotin by the insertion of a sulfur atom into dethiobiotin via a radical-based mechanism. The protein is Biotin synthase of Chlorobaculum tepidum (strain ATCC 49652 / DSM 12025 / NBRC 103806 / TLS) (Chlorobium tepidum).